The following is a 151-amino-acid chain: Austinoid biosynthesis clusters protein F (151 aa).

It belongs to the trt14 isomerase family. In terms of assembly, homodimer.

It participates in secondary metabolite biosynthesis; terpenoid biosynthesis. Part of the gene cluster B that mediates the biosynthesis of the fungal meroterpenoid acetoxydehydroaustin. The first step of the pathway is the synthesis of 3,5-dimethylorsellinic acid by the polyketide synthase ausA. 3,5-dimethylorsellinic acid is then prenylated by the polyprenyl transferase ausN. Further epoxidation by the FAD-dependent monooxygenase ausM and cyclization by the probable terpene cyclase ausL lead to the formation of protoaustinoid A. Protoaustinoid A is then oxidized to spiro-lactone preaustinoid A3 by the combined action of the FAD-binding monooxygenases ausB and ausC, and the dioxygenase ausE. Acid-catalyzed keto-rearrangement and ring contraction of the tetraketide portion of preaustinoid A3 by ausJ lead to the formation of preaustinoid A4. The aldo-keto reductase ausK, with the help of ausH, is involved in the next step by transforming preaustinoid A4 into isoaustinone which is in turn hydroxylated by the P450 monooxygenase ausI to form austinolide. The cytochrome P450 monooxygenase ausG then modifies austinolide to austinol. Austinol is further acetylated to austin by the O-acetyltransferase ausP, which spontaneously changes to dehydroaustin. The cytochrome P450 monooxygenase then converts dehydroaustin is into 7-dehydrodehydroaustin. The hydroxylation catalyzed by ausR permits the second O-acetyltransferase ausQ to add an additional acetyl group to the molecule, leading to the formation of acetoxydehydroaustin. Due to genetic rearrangements of the clusters and the subsequent loss of some enzymes, the end product of the Penicillium brasilianum austinoid biosynthesis clusters is acetoxydehydroaustin. In Penicillium brasilianum, this protein is Austinoid biosynthesis clusters protein F.